Reading from the N-terminus, the 62-residue chain is Trypsin inhibitor MCI-3 (62 aa).

The protein belongs to the protease inhibitor I13 (potato type I serine protease inhibitor) family.

In Momordica charantia (Bitter gourd), this protein is Trypsin inhibitor MCI-3.